The following is a 139-amino-acid chain: Peptide methionine sulfoxide reductase MsrB (139 aa).

One can recognise a MsrB domain in the interval 8–130 (DREWQRELSP…NSASLQLKTQ (123 aa)). Zn(2+)-binding residues include Cys-47, Cys-50, Cys-96, and Cys-99. The active-site Nucleophile is Cys-119.

Belongs to the MsrB Met sulfoxide reductase family. The cofactor is Zn(2+).

The enzyme catalyses L-methionyl-[protein] + [thioredoxin]-disulfide + H2O = L-methionyl-(R)-S-oxide-[protein] + [thioredoxin]-dithiol. This is Peptide methionine sulfoxide reductase MsrB from Acinetobacter baumannii (strain AB307-0294).